A 159-amino-acid polypeptide reads, in one-letter code: NADH-quinone oxidoreductase subunit I (159 aa).

4Fe-4S ferredoxin-type domains lie at 51–80 (RRYENGEERCIACKLCEAICPAQAIVIEAD) and 90–119 (TRYDIDMTKCIYCGLCQEACPVDAIVEGPN). [4Fe-4S] cluster is bound by residues C60, C63, C66, C70, C99, C102, C105, and C109.

The protein belongs to the complex I 23 kDa subunit family. In terms of assembly, NDH-1 is composed of 14 different subunits. Subunits NuoA, H, J, K, L, M, N constitute the membrane sector of the complex. The cofactor is [4Fe-4S] cluster.

The protein localises to the cell inner membrane. It carries out the reaction a quinone + NADH + 5 H(+)(in) = a quinol + NAD(+) + 4 H(+)(out). In terms of biological role, NDH-1 shuttles electrons from NADH, via FMN and iron-sulfur (Fe-S) centers, to quinones in the respiratory chain. The immediate electron acceptor for the enzyme in this species is believed to be ubiquinone. Couples the redox reaction to proton translocation (for every two electrons transferred, four hydrogen ions are translocated across the cytoplasmic membrane), and thus conserves the redox energy in a proton gradient. In Rickettsia peacockii (strain Rustic), this protein is NADH-quinone oxidoreductase subunit I.